The chain runs to 234 residues: Synaptogyrin-4 (234 aa).

The MARVEL domain maps to 18–169 (FLRRPKTITR…QAYLAFQDLR (152 aa)). Transmembrane regions (helical) follow at residues 25–45 (ITRV…LTDG), 66–86 (CSFA…FLVL), 104–124 (LLDF…FCFL), and 145–165 (AAIA…YLAF).

The protein belongs to the synaptogyrin family.

It is found in the membrane. The chain is Synaptogyrin-4 (SYNGR4) from Homo sapiens (Human).